A 339-amino-acid chain; its full sequence is Protein FAM50A (339 aa).

The segment at 1–31 (MAQYKGAASEAGRAMHLMKKREKQREQMEQM) is disordered. N-acetylalanine is present on Ala2. A Glycyl lysine isopeptide (Lys-Gly) (interchain with G-Cter in SUMO2) cross-link involves residue Lys100. The disordered stretch occupies residues 121 to 177 (SFTLEEEEEGGEEEEEAAMYEEEMEREEITTKKRKLGKNPDVDTSFLPDRDREEEEN). A compositionally biased stretch (acidic residues) spans 124 to 146 (LEEEEEGGEEEEEAAMYEEEMER). A Nuclear localization signal motif is present at residues 152–155 (KKRK). The span at 168-177 (PDRDREEEEN) shows a compositional bias: basic and acidic residues.

The protein belongs to the FAM50 family. As to quaternary structure, interacts with EFTUD2, a component of the spliceosome U5 complex. Interacts with DDX41, a component of the spliceosome C complex. In terms of tissue distribution, widely expressed in fetal and adult tissues. Mostly abundant in fetal brain, liver and kidney; in the adult, high levels were also observed in heart, skeletal muscle, spleen, thymus, prostate and small intestine. Expressed in fetal cerebellum and hypothalamus. Low expression is observed in fetal temporal lobe.

It localises to the nucleus. Functionally, probably involved in the regulation of pre-mRNA splicing. This chain is Protein FAM50A (FAM50A), found in Homo sapiens (Human).